Here is a 223-residue protein sequence, read N- to C-terminus: Twisted gastrulation protein homolog 1 (223 aa).

An N-terminal signal peptide occupies residues 1–25 (MKLHYVAVLTLAILMFLTWLPASLS). N-linked (GlcNAc...) asparagine glycans are attached at residues N52 and N81.

It belongs to the twisted gastrulation protein family. As to quaternary structure, interacts with CHRD and BMP4. This interaction enhances CHRD/BMP4 complex formation. Interacts with BMP7.

The protein resides in the secreted. May be involved in dorsoventral axis formation. Seems to antagonize BMP signaling by forming ternary complexes with CHRD and BMPs, thereby preventing BMPs from binding to their receptors. In addition to the anti-BMP function, also has pro-BMP activity, partly mediated by cleavage and degradation of CHRD, which releases BMPs from ternary complexes. May be an important modulator of BMP-regulated cartilage development and chondrocyte differentiation. May play a role in thymocyte development. The sequence is that of Twisted gastrulation protein homolog 1 (TWSG1) from Pongo abelii (Sumatran orangutan).